The chain runs to 213 residues: Large ribosomal subunit protein uL1 (213 aa).

It belongs to the universal ribosomal protein uL1 family. In terms of assembly, part of the 50S ribosomal subunit.

Functionally, binds directly to 23S rRNA. Probably involved in E site tRNA release. Its function is as follows. Protein L1 is also a translational repressor protein, it controls the translation of its operon by binding to its mRNA. The protein is Large ribosomal subunit protein uL1 of Picrophilus torridus (strain ATCC 700027 / DSM 9790 / JCM 10055 / NBRC 100828 / KAW 2/3).